A 551-amino-acid polypeptide reads, in one-letter code: Synapse-associated protein of 47 kDa (551 aa).

2 disordered regions span residues 20–72 and 117–198; these read AGDE…AGKR and AMPA…GQGK. Low complexity-rich tracts occupy residues 26–59, 117–128, and 137–146; these read PAPT…AAAA, AMPAMPSIPSIP, and DGAEGAEGAV. A phosphoserine mark is found at Ser178 and Ser182. Residues 182-197 are compositionally biased toward gly residues; it reads SGGGTPTGDEGQIGQG. The residue at position 186 (Thr186) is a Phosphothreonine. One can recognise a BSD domain in the interval 295–347; sequence VDFEFSYDTAYPTAIAIMAEDKALETMRFELVPKIITEENFWRNYFYRVSLII. The tract at residues 360-391 is disordered; sequence VGQASSGEDANEVATKEKKSKTAEPAKGDSSV. The segment covering 373–386 has biased composition (basic and acidic residues); the sequence is ATKEKKSKTAEPAK. Residue Ser433 is modified to Phosphoserine. A disordered region spans residues 487–551; the sequence is KDYEVVDEGG…DLIEDTDDLK (65 aa). Residues 514-523 are compositionally biased toward acidic residues; it reads DDTEADEDEP. Residues 524-535 show a composition bias toward polar residues; sequence TISNLRTRSTNN. Phosphothreonine is present on Thr530. The segment covering 536 to 551 has biased composition (acidic residues); the sequence is DWEEYADLIEDTDDLK.

As to expression, expressed specifically in neurons and transported to synaptic terminals.

This chain is Synapse-associated protein of 47 kDa (Sap47), found in Drosophila melanogaster (Fruit fly).